Here is a 427-residue protein sequence, read N- to C-terminus: 3-phosphoshikimate 1-carboxyvinyltransferase (427 aa).

3 residues coordinate 3-phosphoshikimate: lysine 27, serine 28, and arginine 32. Lysine 27 lines the phosphoenolpyruvate pocket. 2 residues coordinate phosphoenolpyruvate: glycine 95 and arginine 123. 3-phosphoshikimate is bound by residues serine 166, serine 167, glutamine 168, serine 192, aspartate 305, and lysine 332. Position 168 (glutamine 168) interacts with phosphoenolpyruvate. Aspartate 305 functions as the Proton acceptor in the catalytic mechanism. Arginine 336 and arginine 377 together coordinate phosphoenolpyruvate.

The protein belongs to the EPSP synthase family. As to quaternary structure, monomer.

The protein resides in the cytoplasm. The catalysed reaction is 3-phosphoshikimate + phosphoenolpyruvate = 5-O-(1-carboxyvinyl)-3-phosphoshikimate + phosphate. Its pathway is metabolic intermediate biosynthesis; chorismate biosynthesis. In terms of biological role, catalyzes the transfer of the enolpyruvyl moiety of phosphoenolpyruvate (PEP) to the 5-hydroxyl of shikimate-3-phosphate (S3P) to produce enolpyruvyl shikimate-3-phosphate and inorganic phosphate. This Aeropyrum pernix (strain ATCC 700893 / DSM 11879 / JCM 9820 / NBRC 100138 / K1) protein is 3-phosphoshikimate 1-carboxyvinyltransferase.